Consider the following 299-residue polypeptide: Ribosomal RNA small subunit methyltransferase H 1 (299 aa).

Residues Gly31–His33, Asp50, Phe76, Asp97, and Gln104 contribute to the S-adenosyl-L-methionine site.

Belongs to the methyltransferase superfamily. RsmH family.

It is found in the cytoplasm. It catalyses the reaction cytidine(1402) in 16S rRNA + S-adenosyl-L-methionine = N(4)-methylcytidine(1402) in 16S rRNA + S-adenosyl-L-homocysteine + H(+). Specifically methylates the N4 position of cytidine in position 1402 (C1402) of 16S rRNA. This chain is Ribosomal RNA small subunit methyltransferase H 1, found in Acholeplasma laidlawii (strain PG-8A).